Consider the following 164-residue polypeptide: Superoxide dismutase [Cu-Zn] 3 (164 aa).

H51, H53, and H68 together coordinate Cu cation. Cysteines 62 and 151 form a disulfide. Zn(2+) is bound by residues H68, H76, H85, and D88. H125 lines the Cu cation pocket. Residues 162 to 164 carry the Peroxisome localization signal motif; it reads AKL.

This sequence belongs to the Cu-Zn superoxide dismutase family. Homodimer. Cu cation serves as cofactor. Requires Zn(2+) as cofactor. Expressed in leaves (at protein level).

The protein localises to the peroxisome. The catalysed reaction is 2 superoxide + 2 H(+) = H2O2 + O2. In terms of biological role, destroys radicals which are normally produced within the cells and which are toxic to biological systems. This is Superoxide dismutase [Cu-Zn] 3 (CSD3) from Arabidopsis thaliana (Mouse-ear cress).